The following is a 397-amino-acid chain: Serpin B10 (397 aa).

Residues 74 to 77 (KKRK) carry the Nuclear localization signal motif.

This sequence belongs to the serpin family. Ov-serpin subfamily.

It is found in the nucleus. The protein localises to the cytoplasm. Functionally, protease inhibitor that may play a role in the regulation of protease activities during hematopoiesis and apoptosis induced by TNF. May regulate protease activities in the cytoplasm and in the nucleus. The protein is Serpin B10 (SERPINB10) of Sorex araneus (Eurasian common shrew).